A 142-amino-acid polypeptide reads, in one-letter code: Immunoglobulin omega chain (142 aa).

An N-terminal signal peptide occupies residues 1–19; it reads MAWTSVLLMLLAHLTGCGP. Positions 20-41 are framework-1; that stretch reads QPMVHQPPSASSSLGATIRLSC. A disulfide bridge connects residues Cys41 and Cys115. The tract at residues 42–56 is complementarity-determining-1; that stretch reads TLSNDHNIGIYSIYW. The framework-2 stretch occupies residues 57 to 70; the sequence is YQQRPGHPPRFLLR. The tract at residues 71 to 81 is complementarity-determining-2; it reads YFSHSDKHQGP. Residues 82-115 are framework-3; it reads DIPPRFSGSKDTARNLGYLSISELQPEDEAVYYC.

The protein belongs to the immunoglobulin superfamily. In terms of tissue distribution, only expressed by pre-B-cells.

Associates with the Ig-mu chain to form a molecular complex that is expressed on the surface of pre-B-cells. This complex presumably regulates Ig gene rearrangements in the early steps of B-cell differentiation. The protein is Immunoglobulin omega chain of Mus musculus (Mouse).